The primary structure comprises 125 residues: Ribonuclease P protein component (125 aa).

The protein belongs to the RnpA family. In terms of assembly, consists of a catalytic RNA component (M1 or rnpB) and a protein subunit.

It carries out the reaction Endonucleolytic cleavage of RNA, removing 5'-extranucleotides from tRNA precursor.. In terms of biological role, RNaseP catalyzes the removal of the 5'-leader sequence from pre-tRNA to produce the mature 5'-terminus. It can also cleave other RNA substrates such as 4.5S RNA. The protein component plays an auxiliary but essential role in vivo by binding to the 5'-leader sequence and broadening the substrate specificity of the ribozyme. This is Ribonuclease P protein component from Clostridium perfringens (strain ATCC 13124 / DSM 756 / JCM 1290 / NCIMB 6125 / NCTC 8237 / Type A).